A 177-amino-acid chain; its full sequence is Large ribosomal subunit protein uL6 (177 aa).

This sequence belongs to the universal ribosomal protein uL6 family. Part of the 50S ribosomal subunit.

Functionally, this protein binds to the 23S rRNA, and is important in its secondary structure. It is located near the subunit interface in the base of the L7/L12 stalk, and near the tRNA binding site of the peptidyltransferase center. This Cupriavidus pinatubonensis (strain JMP 134 / LMG 1197) (Cupriavidus necator (strain JMP 134)) protein is Large ribosomal subunit protein uL6.